A 76-amino-acid chain; its full sequence is Acyl carrier protein (76 aa).

The Carrier domain maps to 1 to 76; the sequence is MATFDKVKDI…DVVNYIEQNQ (76 aa). Position 36 is an O-(pantetheine 4'-phosphoryl)serine (serine 36).

Belongs to the acyl carrier protein (ACP) family. In terms of processing, 4'-phosphopantetheine is transferred from CoA to a specific serine of apo-ACP by AcpS. This modification is essential for activity because fatty acids are bound in thioester linkage to the sulfhydryl of the prosthetic group.

The protein resides in the cytoplasm. It participates in lipid metabolism; fatty acid biosynthesis. Its function is as follows. Carrier of the growing fatty acid chain in fatty acid biosynthesis. The protein is Acyl carrier protein of Natranaerobius thermophilus (strain ATCC BAA-1301 / DSM 18059 / JW/NM-WN-LF).